The chain runs to 307 residues: Transcription initiation factor IIB (307 aa).

The segment at 11–42 (FTEECPACGSAEIVFDEERGEYVCANCGLVTE) adopts a TFIIB-type zinc-finger fold. The Zn(2+) site is built by cysteine 15, cysteine 18, cysteine 34, and cysteine 37. Positions 48–69 (PGPEWRHFNPDQRQRRSRTGEP) are disordered. Basic and acidic residues predominate over residues 50-69 (PEWRHFNPDQRQRRSRTGEP). Tandem repeats lie at residues 123–207 (LELE…QRRL) and 218–299 (DHLP…EICE).

Belongs to the TFIIB family.

Functionally, stabilizes TBP binding to an archaeal box-A promoter. Also responsible for recruiting RNA polymerase II to the pre-initiation complex (DNA-TBP-TFIIB). The chain is Transcription initiation factor IIB from Methanopyrus kandleri (strain AV19 / DSM 6324 / JCM 9639 / NBRC 100938).